The primary structure comprises 401 residues: CCA-adding enzyme (401 aa).

ATP contacts are provided by Gly32 and Arg35. The CTP site is built by Gly32 and Arg35. Residues Asp45 and Asp47 each contribute to the Mg(2+) site. Arg116, Asp159, Arg162, Arg165, and Arg168 together coordinate ATP. Arg116, Asp159, Arg162, Arg165, and Arg168 together coordinate CTP.

It belongs to the tRNA nucleotidyltransferase/poly(A) polymerase family. Bacterial CCA-adding enzyme type 3 subfamily. In terms of assembly, homodimer. Mg(2+) is required as a cofactor.

The catalysed reaction is a tRNA precursor + 2 CTP + ATP = a tRNA with a 3' CCA end + 3 diphosphate. It carries out the reaction a tRNA with a 3' CCA end + 2 CTP + ATP = a tRNA with a 3' CCACCA end + 3 diphosphate. Its function is as follows. Catalyzes the addition and repair of the essential 3'-terminal CCA sequence in tRNAs without using a nucleic acid template. Adds these three nucleotides in the order of C, C, and A to the tRNA nucleotide-73, using CTP and ATP as substrates and producing inorganic pyrophosphate. tRNA 3'-terminal CCA addition is required both for tRNA processing and repair. Also involved in tRNA surveillance by mediating tandem CCA addition to generate a CCACCA at the 3' terminus of unstable tRNAs. While stable tRNAs receive only 3'-terminal CCA, unstable tRNAs are marked with CCACCA and rapidly degraded. In Leuconostoc mesenteroides subsp. mesenteroides (strain ATCC 8293 / DSM 20343 / BCRC 11652 / CCM 1803 / JCM 6124 / NCDO 523 / NBRC 100496 / NCIMB 8023 / NCTC 12954 / NRRL B-1118 / 37Y), this protein is CCA-adding enzyme.